An 873-amino-acid polypeptide reads, in one-letter code: MTEDKAEKVMPEETAFEEIEKDFQEVLSELSGDKSLEKFRTEYEKLHSIMKKSYENEKRLMAKCRELNAEIVVNSAKVATALKLSQDDQTTIASLKKEIEKAWKMVDSAYDKEQKAKETILALKEEIVNLTKLVEQGSGLSMDQDSNIRDLLKFKEEVTKERDQLLSEVVKLRENLAQTIEKQQAAEHAKEEAEMAISQFQQEIQHRQNEASRESRKKEKLEKELRQIQTDMDGRQAEIKAMQQYMHKSKEELQRLEQQLKEQKILNERAAKEVEQFQMRNAKLQQENDQHTLTCEQLSQENQQKALELKAKEDEIHQMRLDLGKLNKIREQIHKKLHQLDDQKAEVEQQKDTLKNQILGLEREVESSKKQAELDKKAMEELLRERDILNKNMLKAVSATQKQVDLVKLHEQAKKNLEEEIQNYKDEAQKQRKIIFQLEKERDRYINEASDLTQRVLANMEDIKVREIQIFDYRKKIAESETKLKQQQNLYEAVRSDRNLYSKNLVEAQDEITEMKRKLKIMTHQVDQLKEEISAKEAALVKLHLEQQRIEKEKETLKAELQKLRQQALETKHFIEKQEVEERKLLRIIAEADGERVRQKKELDQVISERDILGSQLVRRNDELALLYEKIKIQQSVLNKGETQYNQRVEDMRILKLEIKKLRREKGILARSVANVEELRQELYHMQREFLKERTRCRALEEELENPMNVHRWRKLEASDPSTFELIQKIHTLQKRLISKTEEVVEKELLLQEKEKLYVELKHILARQPGPEAAEQLQIYRHTLREKTKQLKVLSSELNMYESQSQEYKYEIERLGNELMSLKKKYLAQKRKELVLKNKDRMSMNNIFSETKKSVPRFTGGGFPLHQATKVKF.

2 coiled-coil regions span residues 106–609 (VDSA…VISE) and 642–832 (ETQY…QKRK). The interval 202–221 (QEIQHRQNEASRESRKKEKL) is disordered. Positions 204-221 (IQHRQNEASRESRKKEKL) are enriched in basic and acidic residues.

This sequence belongs to the CFAP58 family. As to quaternary structure, interacts with ODFP2. As to expression, predominantly expressed in the testis. Also found at lower levels in ciliated cells and tissues such as neural progenitor cells and oviducts.

It is found in the cell projection. The protein resides in the cilium. The protein localises to the flagellum. It localises to the cytoplasm. Its subcellular location is the cytoskeleton. It is found in the microtubule organizing center. The protein resides in the centrosome. Its function is as follows. Has an essential role in the assembly and organization of the sperm flagellar axoneme. Required for the elongation of the primary cilium and sperm flagellar midpiece via modulation of the Notch signaling pathway. In Mus musculus (Mouse), this protein is Cilia- and flagella-associated protein 58.